The sequence spans 399 residues: Tryptophan synthase beta chain (399 aa).

An N6-(pyridoxal phosphate)lysine modification is found at K86.

It belongs to the TrpB family. As to quaternary structure, tetramer of two alpha and two beta chains. Pyridoxal 5'-phosphate is required as a cofactor.

The enzyme catalyses (1S,2R)-1-C-(indol-3-yl)glycerol 3-phosphate + L-serine = D-glyceraldehyde 3-phosphate + L-tryptophan + H2O. The protein operates within amino-acid biosynthesis; L-tryptophan biosynthesis; L-tryptophan from chorismate: step 5/5. In terms of biological role, the beta subunit is responsible for the synthesis of L-tryptophan from indole and L-serine. This chain is Tryptophan synthase beta chain (trpB), found in Buchnera aphidicola subsp. Schizaphis graminum (strain Sg).